A 475-amino-acid polypeptide reads, in one-letter code: ATP-dependent rRNA helicase RRP3 (475 aa).

Residues 30–59 (ALKQKKQAPVTEKPEEIVETTSEASQDVNS) are disordered. Residues 48–59 (ETTSEASQDVNS) are compositionally biased toward polar residues. The short motif at 64–92 (HTFSELNLVPELMEAIEKLKYTKPTPIQS) is the Q motif element. Residues 95 to 266 (IPHALEGKDI…RASLHEPVKV (172 aa)) enclose the Helicase ATP-binding domain. An ATP-binding site is contributed by 108-115 (AQTGSGKT). Positions 214 to 217 (DEAD) match the DEAD box motif. Residues 293–437 (FLIHLLNEFM…KDPSPPRDVL (145 aa)) enclose the Helicase C-terminal domain. The segment at 451-475 (AIKQTKDFHEKRTKKKRDDRDREER) is disordered.

It belongs to the DEAD box helicase family. DDX47/RRP3 subfamily.

Its subcellular location is the nucleus. In terms of biological role, required for pre-ribosomal RNA processing. Involved in the maturation of the 35S-pre-rRNA and to its cleavage to mature 18S rRNA. In Meyerozyma guilliermondii (strain ATCC 6260 / CBS 566 / DSM 6381 / JCM 1539 / NBRC 10279 / NRRL Y-324) (Yeast), this protein is ATP-dependent rRNA helicase RRP3 (RRP3).